The sequence spans 423 residues: Torsin-4A (423 aa).

Positions Pro-47–Arg-68 are disordered. Phosphoserine is present on residues Ser-63 and Ser-81. Position 89 is a phosphothreonine (Thr-89). The residue at position 106 (Ser-106) is a Phosphoserine. A helical membrane pass occupies residues Cys-122–Ile-138. Gly-194–Ser-201 serves as a coordination point for ATP.

This sequence belongs to the ClpA/ClpB family. Torsin subfamily.

The protein localises to the membrane. In Homo sapiens (Human), this protein is Torsin-4A (TOR4A).